The primary structure comprises 473 residues: Mediator of RNA polymerase II transcription subunit 29 (473 aa).

Polar residues predominate over residues 1-12; sequence MSGQGPPSNLTP. Disordered stretches follow at residues 1–319 and 444–473; these read MSGQ…NEEQ and STME…EMAE. Residues 13–50 are compositionally biased toward low complexity; sequence QQQHMIMQQQQQQQMMRQQQIQQQQLHQRQLQQQQAQQ. Over residues 51-62 the composition is skewed to polar residues; it reads SYQRSRTPQMQQ. 2 stretches are compositionally biased toward low complexity: residues 111-123 and 130-139; these read QMMQ…NQPM and VSRPGSVAPP. Polar residues-rich tracts occupy residues 148-183 and 255-269; these read TGPS…QQSH and PPGS…QPGS. Low complexity-rich tracts occupy residues 272 to 286 and 294 to 308; these read APGS…QPPA and AASG…AAPA.

The protein belongs to the Mediator complex subunit 29 family. In terms of assembly, component of the Mediator complex.

Its subcellular location is the nucleus. Component of the Mediator complex, a coactivator involved in the regulated transcription of nearly all RNA polymerase II-dependent genes. Mediator functions as a bridge to convey information from gene-specific regulatory proteins to the basal RNA polymerase II transcription machinery. Mediator is recruited to promoters by direct interactions with regulatory proteins and serves as a scaffold for the assembly of a functional preinitiation complex with RNA polymerase II and the general transcription factors. This chain is Mediator of RNA polymerase II transcription subunit 29 (mdt-29), found in Caenorhabditis briggsae.